The sequence spans 217 residues: Dual specificity phosphatase 29 (217 aa).

A Tyrosine-protein phosphatase domain is found at 46–194 (HVNEVWPNLY…LRELDIKLAL (149 aa)). Position 138–145 (138–145 (HCAMGRSR)) interacts with substrate. C139 (phosphocysteine intermediate) is an active-site residue.

Belongs to the protein-tyrosine phosphatase family. Non-receptor class dual specificity subfamily.

It localises to the cytoplasm. The protein localises to the nucleus. It catalyses the reaction O-phospho-L-tyrosyl-[protein] + H2O = L-tyrosyl-[protein] + phosphate. The enzyme catalyses O-phospho-L-seryl-[protein] + H2O = L-seryl-[protein] + phosphate. The catalysed reaction is O-phospho-L-threonyl-[protein] + H2O = L-threonyl-[protein] + phosphate. Dual specificity phosphatase able to dephosphorylate phosphotyrosine, phosphoserine and phosphothreonine residues within the same substrate, with a preference for phosphotyrosine as a substrate. Involved in the modulation of AMPK and MAPK1/2 signaling pathways. The sequence is that of Dual specificity phosphatase 29 (DUSP29) from Anolis carolinensis (Green anole).